The following is a 118-amino-acid chain: Large ribosomal subunit protein bL20 (118 aa).

This sequence belongs to the bacterial ribosomal protein bL20 family.

Binds directly to 23S ribosomal RNA and is necessary for the in vitro assembly process of the 50S ribosomal subunit. It is not involved in the protein synthesizing functions of that subunit. This is Large ribosomal subunit protein bL20 from Tolumonas auensis (strain DSM 9187 / NBRC 110442 / TA 4).